A 383-amino-acid chain; its full sequence is Putative F-box protein At3g22650 (383 aa).

The F-box domain maps to 3–50; it reads SCERSLLPIDIIEEICCRIPVEYLTQFKLTCKQWFALLKDKRFIYKYL.

The sequence is that of Putative F-box protein At3g22650 from Arabidopsis thaliana (Mouse-ear cress).